A 163-amino-acid chain; its full sequence is Inorganic pyrophosphatase (163 aa).

Residue E8 participates in Mg(2+) binding. Residues K16, R30, and Y42 each coordinate substrate. Residues D52, D57, D84, and D89 each contribute to the Mg(2+) site. D89 serves as the catalytic Proton acceptor. Substrate is bound at residue Y126.

Belongs to the PPase family. In terms of assembly, homohexamer. Mg(2+) serves as cofactor.

The protein resides in the cytoplasm. It catalyses the reaction diphosphate + H2O = 2 phosphate + H(+). Functionally, catalyzes the hydrolysis of inorganic pyrophosphate (PPi) forming two phosphate ions. This Streptomyces coelicolor (strain ATCC BAA-471 / A3(2) / M145) protein is Inorganic pyrophosphatase.